Reading from the N-terminus, the 458-residue chain is Lysine-rich nucleolar protein 1 (458 aa).

The segment covering 1–14 (MITKTHKVDLGLPE) has biased composition (basic and acidic residues). The tract at residues 1 to 21 (MITKTHKVDLGLPEKKKKKKV) is disordered. A Glycyl lysine isopeptide (Lys-Gly) (interchain with G-Cter in SUMO2) cross-link involves residue K7. Phosphoserine is present on residues S42 and S50. Positions 46–305 (ATSPSKSVAH…ESGVAGDPWK (260 aa)) are disordered. Positions 64–73 (VKKKKKKKKG) are enriched in basic residues. K101 participates in a covalent cross-link: Glycyl lysine isopeptide (Lys-Gly) (interchain with G-Cter in SUMO2). At S111 the chain carries Phosphoserine. K130 is covalently cross-linked (Glycyl lysine isopeptide (Lys-Gly) (interchain with G-Cter in SUMO2)). The residue at position 132 (S132) is a Phosphoserine. Over residues 145–155 (GKKLKKHKKEK) the composition is skewed to basic residues. The span at 173-192 (EAREARDVGDTCSVGKKDEE) shows a compositional bias: basic and acidic residues. Residues 198–218 (QKRKRKSPREHNGKVKKKKKI) are compositionally biased toward basic residues. K249 participates in a covalent cross-link: Glycyl lysine isopeptide (Lys-Gly) (interchain with G-Cter in SUMO1); alternate. A Glycyl lysine isopeptide (Lys-Gly) (interchain with G-Cter in SUMO2); alternate cross-link involves residue K249. S265 carries the post-translational modification Phosphoserine. Positions 265 to 274 (SAKKKMKSKK) are enriched in basic residues. Glycyl lysine isopeptide (Lys-Gly) (interchain with G-Cter in SUMO2) cross-links involve residues K275, K287, and K305. Residues 306–458 (EETDTDLEVV…NASKSVKLED (153 aa)) are interaction with ZNF106. Phosphothreonine is present on residues T308 and T310. Residues K319, K353, K373, K375, and K407 each participate in a glycyl lysine isopeptide (Lys-Gly) (interchain with G-Cter in SUMO2) cross-link. The span at 336-353 (QEEIDRESGKTEASETRK) shows a compositional bias: basic and acidic residues. Positions 336–355 (QEEIDRESGKTEASETRKWT) are disordered. R430 carries the omega-N-methylarginine modification. K442 participates in a covalent cross-link: Glycyl lysine isopeptide (Lys-Gly) (interchain with G-Cter in SUMO2).

As to quaternary structure, interacts with ZNF106.

It localises to the nucleus. It is found in the nucleolus. The chain is Lysine-rich nucleolar protein 1 (KNOP1) from Homo sapiens (Human).